Consider the following 205-residue polypeptide: Small ribosomal subunit protein uS4 (205 aa).

Positions 26 to 46 (PVNRREYGPGQHGQRRKQKPS) are disordered. In terms of domain architecture, S4 RNA-binding spans 94–157 (RRLDAVVYRL…KQLAIVLDAV (64 aa)).

This sequence belongs to the universal ribosomal protein uS4 family. In terms of assembly, part of the 30S ribosomal subunit. Contacts protein S5. The interaction surface between S4 and S5 is involved in control of translational fidelity.

One of the primary rRNA binding proteins, it binds directly to 16S rRNA where it nucleates assembly of the body of the 30S subunit. Its function is as follows. With S5 and S12 plays an important role in translational accuracy. This Gluconobacter oxydans (strain 621H) (Gluconobacter suboxydans) protein is Small ribosomal subunit protein uS4.